Reading from the N-terminus, the 406-residue chain is Tryptophan 2,3-dioxygenase (406 aa).

Serine 19 carries the post-translational modification Phosphoserine. Residues 72-76 (FIITH) and arginine 144 each bind substrate. Histidine 328 is a heme binding site. Threonine 342 contributes to the substrate binding site.

Belongs to the tryptophan 2,3-dioxygenase family. Homotetramer. Dimer of dimers. Heme is required as a cofactor.

It carries out the reaction L-tryptophan + O2 = N-formyl-L-kynurenine. It participates in amino-acid degradation; L-tryptophan degradation via kynurenine pathway; L-kynurenine from L-tryptophan: step 1/2. Heme-dependent dioxygenase that catalyzes the oxidative cleavage of the L-tryptophan (L-Trp) pyrrole ring and converts L-tryptophan to N-formyl-L-kynurenine. Catalyzes the oxidative cleavage of the indole moiety. The chain is Tryptophan 2,3-dioxygenase from Mus musculus (Mouse).